The sequence spans 251 residues: Putative ATP-binding protein Rv3427c in insertion sequence (251 aa).

An ATP-binding site is contributed by 108 to 115 (GPVGVGKT).

Belongs to the IS21/IS1162 putative ATP-binding protein family.

This Mycobacterium tuberculosis (strain ATCC 25618 / H37Rv) protein is Putative ATP-binding protein Rv3427c in insertion sequence.